A 222-amino-acid polypeptide reads, in one-letter code: NADH dehydrogenase [ubiquinone] iron-sulfur protein 8-B, mitochondrial (222 aa).

4Fe-4S ferredoxin-type domains follow at residues 114 to 143 (RRYPTGEERCIACKLCEAVCPAQAITIEAE) and 153 to 182 (TRYDIDMTKCIYCGFCQEACPVDAIVEGPN). Residues Cys-123, Cys-126, Cys-129, Cys-133, Cys-162, Cys-165, Cys-168, and Cys-172 each coordinate [4Fe-4S] cluster.

This sequence belongs to the complex I 23 kDa subunit family. In terms of assembly, complex I is composed of at least 49 different subunits. This is a component of the iron-sulfur (IP) fragment of the enzyme. It depends on [4Fe-4S] cluster as a cofactor.

The protein resides in the mitochondrion. The catalysed reaction is a ubiquinone + NADH + 5 H(+)(in) = a ubiquinol + NAD(+) + 4 H(+)(out). In terms of biological role, core subunit of the mitochondrial membrane respiratory chain NADH dehydrogenase (Complex I) that is believed to belong to the minimal assembly required for catalysis. Complex I functions in the transfer of electrons from NADH to the respiratory chain. The immediate electron acceptor for the enzyme is believed to be ubiquinone. May donate electrons to ubiquinone. This is NADH dehydrogenase [ubiquinone] iron-sulfur protein 8-B, mitochondrial from Arabidopsis thaliana (Mouse-ear cress).